The chain runs to 150 residues: Deoxyuridine 5'-triphosphate nucleotidohydrolase (150 aa).

Substrate contacts are provided by residues 69–71 (RSG), Asn-82, 86–88 (LID), and Met-96.

Belongs to the dUTPase family. Mg(2+) is required as a cofactor.

The enzyme catalyses dUTP + H2O = dUMP + diphosphate + H(+). It functions in the pathway pyrimidine metabolism; dUMP biosynthesis; dUMP from dCTP (dUTP route): step 2/2. Functionally, this enzyme is involved in nucleotide metabolism: it produces dUMP, the immediate precursor of thymidine nucleotides and it decreases the intracellular concentration of dUTP so that uracil cannot be incorporated into DNA. This Alcanivorax borkumensis (strain ATCC 700651 / DSM 11573 / NCIMB 13689 / SK2) protein is Deoxyuridine 5'-triphosphate nucleotidohydrolase.